The sequence spans 163 residues: UPF0416 protein RBE_1121 (163 aa).

This sequence belongs to the UPF0416 family.

This is UPF0416 protein RBE_1121 from Rickettsia bellii (strain RML369-C).